Consider the following 226-residue polypeptide: Ribonuclease 3 (226 aa).

The region spanning 6–128 is the RNase III domain; the sequence is ANKIQQILGY…LIGSIYLDSN (123 aa). Glu-41 lines the Mg(2+) pocket. Residue Asp-45 is part of the active site. Positions 114 and 117 each coordinate Mg(2+). Glu-117 is an active-site residue. Residues 155–225 enclose the DRBM domain; the sequence is DPKTRLQEYL…ARKALIKLGV (71 aa).

This sequence belongs to the ribonuclease III family. As to quaternary structure, homodimer. It depends on Mg(2+) as a cofactor.

Its subcellular location is the cytoplasm. The enzyme catalyses Endonucleolytic cleavage to 5'-phosphomonoester.. Functionally, digests double-stranded RNA. Involved in the processing of primary rRNA transcript to yield the immediate precursors to the large and small rRNAs (23S and 16S). Processes some mRNAs, and tRNAs when they are encoded in the rRNA operon. Processes pre-crRNA and tracrRNA of type II CRISPR loci if present in the organism. This chain is Ribonuclease 3, found in Buchnera aphidicola subsp. Schizaphis graminum (strain Sg).